The following is a 61-amino-acid chain: Small ribosomal subunit protein uS14 (61 aa).

Zn(2+)-binding residues include Cys24, Cys27, Cys40, and Cys43.

The protein belongs to the universal ribosomal protein uS14 family. Zinc-binding uS14 subfamily. Part of the 30S ribosomal subunit. Contacts proteins S3 and S10. It depends on Zn(2+) as a cofactor.

In terms of biological role, binds 16S rRNA, required for the assembly of 30S particles and may also be responsible for determining the conformation of the 16S rRNA at the A site. The protein is Small ribosomal subunit protein uS14 of Streptococcus pyogenes serotype M49 (strain NZ131).